Reading from the N-terminus, the 253-residue chain is Triosephosphate isomerase (253 aa).

Substrate-binding residues include N12 and K14. The Electrophile role is filled by H96. The Proton acceptor role is filled by E169.

The protein belongs to the triosephosphate isomerase family. In terms of assembly, homodimer.

The protein resides in the cytoplasm. It carries out the reaction D-glyceraldehyde 3-phosphate = dihydroxyacetone phosphate. Its pathway is carbohydrate biosynthesis; gluconeogenesis. It functions in the pathway carbohydrate degradation; glycolysis; D-glyceraldehyde 3-phosphate from glycerone phosphate: step 1/1. In terms of biological role, antigen to the host M.1 monoclonal antibody. The chain is Triosephosphate isomerase (TPI) from Schistosoma mansoni (Blood fluke).